We begin with the raw amino-acid sequence, 934 residues long: 3-hydroxy-3-methylglutaryl-coenzyme A reductase (934 aa).

Topologically, residues 1-111 (MFYHGASANQ…VLNLVRGAET (111 aa)) are lumenal. A helical transmembrane segment spans residues 112 to 132 (FDIALVTCAYIAMFYTLFNLF). The SSD domain occupies 113–280 (DIALVTCAYI…STFLSAILSL (168 aa)). Residues 133-141 (ARMRAVGSK) are Cytoplasmic-facing. A helical transmembrane segment spans residues 142–162 (VWLGLSTLVSSFFAFLFALYI). Topologically, residues 163–168 (TTRVLD) are lumenal. A helical membrane pass occupies residues 169–189 (LSIPFLSLSEGIPFFVAVVGF). The Cytoplasmic segment spans residues 190–231 (NNKILLAEKVLQNQLNAQSSKNDAPTVLYQALREQGPLLLRD). A helical membrane pass occupies residues 232–252 (HLFMITAFLGCSFYASYLDGL). Residues 253-256 (KNFC) lie on the Lumenal side of the membrane. The chain crosses the membrane as a helical span at residues 257-277 (ILAALILAFDILTTSTFLSAI). Residues 278–334 (LSLKLEINQIHRSTLLREQLEDDGLTETTVDDVLKSNSLAGTKTFTDAPSTLVTVAK) are Cytoplasmic-facing. The chain crosses the membrane as a helical span at residues 335–355 (VAGVSVFFGLHFYGFGSAWLS). At 356–421 (DLSAGNETND…GLISTAARDK (66 aa)) the chain is on the lumenal side. N-linked (GlcNAc...) asparagine glycans are attached at residues Asn-361, Asn-364, and Asn-382. Residues 422 to 442 (YISKFILFAFAVSASINVYLL) form a helical membrane-spanning segment. Residues 443-934 (NVARIHTTRL…MQHNRAAAKK (492 aa)) are Cytoplasmic-facing. Glu-618 (charge relay system) is an active-site residue. 624–630 (SAMRGCK) is a CoA binding site. NADP(+)-binding positions include 685-687 (SRF) and 712-720 (DAMGMNMIS). Lys-752 (charge relay system) is an active-site residue. 781–783 (VLK) serves as a coordination point for CoA. The active-site Charge relay system is Asp-828. A CoA-binding site is contributed by 923 to 924 (SH). Residue His-924 is the Proton donor of the active site. 928 to 929 (NR) serves as a coordination point for NADP(+).

The protein belongs to the HMG-CoA reductase family.

It is found in the endoplasmic reticulum membrane. The catalysed reaction is (R)-mevalonate + 2 NADP(+) + CoA = (3S)-3-hydroxy-3-methylglutaryl-CoA + 2 NADPH + 2 H(+). It functions in the pathway metabolic intermediate biosynthesis; (R)-mevalonate biosynthesis; (R)-mevalonate from acetyl-CoA: step 3/3. In terms of biological role, HMG-CoA reductase; part of the first module of ergosterol biosynthesis pathway that includes the early steps of the pathway, conserved across all eukaryotes, and which results in the formation of mevalonate from acetyl-coenzyme A (acetyl-CoA). In this module, the cytosolic acetyl-CoA acetyltransferase catalyzes the formation of acetoacetyl-CoA. The hydroxymethylglutaryl-CoA synthase then condenses acetyl-CoA with acetoacetyl-CoA to form HMG-CoA. The rate-limiting step of the early module is the reduction to mevalonate by the 3-hydroxy-3-methylglutaryl-coenzyme A (HMG-CoA) reductase. This is 3-hydroxy-3-methylglutaryl-coenzyme A reductase from Cyberlindnera jadinii (Torula yeast).